The primary structure comprises 254 residues: 3-deoxy-manno-octulosonate cytidylyltransferase (254 aa).

Belongs to the KdsB family.

It localises to the cytoplasm. The enzyme catalyses 3-deoxy-alpha-D-manno-oct-2-ulosonate + CTP = CMP-3-deoxy-beta-D-manno-octulosonate + diphosphate. It functions in the pathway nucleotide-sugar biosynthesis; CMP-3-deoxy-D-manno-octulosonate biosynthesis; CMP-3-deoxy-D-manno-octulosonate from 3-deoxy-D-manno-octulosonate and CTP: step 1/1. Its pathway is bacterial outer membrane biogenesis; lipopolysaccharide biosynthesis. In terms of biological role, activates KDO (a required 8-carbon sugar) for incorporation into bacterial lipopolysaccharide in Gram-negative bacteria. The protein is 3-deoxy-manno-octulosonate cytidylyltransferase of Pseudomonas entomophila (strain L48).